A 209-amino-acid polypeptide reads, in one-letter code: Uracil phosphoribosyltransferase (209 aa).

5-phospho-alpha-D-ribose 1-diphosphate is bound by residues Arg79, Arg104, and Thr131–Thr139. Uracil is bound by residues Ile194 and Gly199–Ala201. Asp200 is a 5-phospho-alpha-D-ribose 1-diphosphate binding site.

It belongs to the UPRTase family. Mg(2+) serves as cofactor.

It carries out the reaction UMP + diphosphate = 5-phospho-alpha-D-ribose 1-diphosphate + uracil. The protein operates within pyrimidine metabolism; UMP biosynthesis via salvage pathway; UMP from uracil: step 1/1. With respect to regulation, allosterically activated by GTP. In terms of biological role, catalyzes the conversion of uracil and 5-phospho-alpha-D-ribose 1-diphosphate (PRPP) to UMP and diphosphate. The protein is Uracil phosphoribosyltransferase of Bradyrhizobium diazoefficiens (strain JCM 10833 / BCRC 13528 / IAM 13628 / NBRC 14792 / USDA 110).